The chain runs to 164 residues: Nucleotide-binding protein Mfla_1706 (164 aa).

This sequence belongs to the YajQ family.

Functionally, nucleotide-binding protein. The protein is Nucleotide-binding protein Mfla_1706 of Methylobacillus flagellatus (strain ATCC 51484 / DSM 6875 / VKM B-1610 / KT).